Here is a 561-residue protein sequence, read N- to C-terminus: Oligo-1,6-glucosidase 1 (561 aa).

5 residues coordinate Ca(2+): D20, N22, D24, F26, and D28. Catalysis depends on D199, which acts as the Nucleophile. The active-site Proton donor is E255.

Belongs to the glycosyl hydrolase 13 family.

The protein localises to the cytoplasm. It catalyses the reaction Hydrolysis of (1-&gt;6)-alpha-D-glucosidic linkages in some oligosaccharides produced from starch and glycogen by alpha-amylase, and in isomaltose.. Its function is as follows. Hydrolyzes various disaccharides such as sucrose, maltose, and isomaltose with different efficiencies. Also hydrolyzes longer maltodextrins from maltotriose up to maltohexaose, but not maltoheptaose, palatinose, isomaltotriose, or isomaltotetraose. This chain is Oligo-1,6-glucosidase 1 (malL), found in Bacillus subtilis (strain 168).